The following is a 148-amino-acid chain: Small ribosomal subunit protein bS16 (148 aa).

Residues 106–148 form a disordered region; that stretch reads QAAARAAAGAEDRPATTPKKAKKSGSAEEAEAAPATDAPAAGQ. Residues 137–148 are compositionally biased toward low complexity; that stretch reads AAPATDAPAAGQ.

Belongs to the bacterial ribosomal protein bS16 family.

This is Small ribosomal subunit protein bS16 from Frankia casuarinae (strain DSM 45818 / CECT 9043 / HFP020203 / CcI3).